A 285-amino-acid polypeptide reads, in one-letter code: HTH-type transcriptional regulator MurR (285 aa).

In terms of domain architecture, HTH rpiR-type spans Met1–Ser77. Residues Ser37–Gln56 constitute a DNA-binding region (H-T-H motif). Residues Ile128–Val268 enclose the SIS domain.

Homotetramer.

The protein operates within amino-sugar metabolism; N-acetylmuramate degradation [regulation]. Represses the expression of the murPQ operon involved in the uptake and degradation of N-acetylmuramic acid (MurNAc). Binds to two adjacent inverted repeats within the operator region. MurNAc 6-phosphate, the substrate of MurQ, is the specific inducer that weakens binding of MurR to the operator. The chain is HTH-type transcriptional regulator MurR from Escherichia coli (strain B / BL21-DE3).